Consider the following 120-residue polypeptide: Putative ferric transport system permease-like protein AfuB (120 aa).

The Cytoplasmic portion of the chain corresponds to 1–38; it reads MESLPGQIDKSLDEASLSLRAGSLRTITHILLPLLRPA. The region spanning 1 to 102 is the ABC transmembrane type-1 domain; the sequence is MESLPGQIDK…VVMLAIIFIF (102 aa). The helical transmembrane segment at 39 to 59 threads the bilayer; it reads ILSALIYSFVRAITTVSAIVF. The Periplasmic portion of the chain corresponds to 60 to 81; that stretch reads LVTPDTRVATAYILNRVEDGEY. A helical transmembrane segment spans residues 82–102; the sequence is GVAIAYGSILIVVMLAIIFIF. Over 103–120 the chain is Cytoplasmic; it reads DWLIGESRTSRSKAKNQA.

This sequence belongs to the binding-protein-dependent transport system permease family. FbpB subfamily.

Its subcellular location is the cell inner membrane. Functionally, a severely truncated paralog of the AfuB uptake protein, homologous only to the last 20% of the intact protein in Actinobacillus. The polypeptide is Putative ferric transport system permease-like protein AfuB (afuB) (Escherichia coli (strain K12)).